The chain runs to 337 residues: Dihydroorotate dehydrogenase (quinone) (337 aa).

Residues 62–66 (AGLDK) and T86 contribute to the FMN site. Residue K66 coordinates substrate. Substrate is bound at residue 111-115 (NRMGF). Residues N140 and N173 each coordinate FMN. N173 lines the substrate pocket. The Nucleophile role is filled by S176. Residue N178 coordinates substrate. 2 residues coordinate FMN: K218 and T246. 247-248 (NT) serves as a coordination point for substrate. FMN contacts are provided by residues G269, G298, and 319 to 320 (YS).

The protein belongs to the dihydroorotate dehydrogenase family. Type 2 subfamily. Monomer. The cofactor is FMN.

It localises to the cell membrane. The catalysed reaction is (S)-dihydroorotate + a quinone = orotate + a quinol. It functions in the pathway pyrimidine metabolism; UMP biosynthesis via de novo pathway; orotate from (S)-dihydroorotate (quinone route): step 1/1. Catalyzes the conversion of dihydroorotate to orotate with quinone as electron acceptor. This Wigglesworthia glossinidia brevipalpis protein is Dihydroorotate dehydrogenase (quinone).